The following is a 560-amino-acid chain: NAD-dependent malic enzyme (560 aa).

Tyr100 (proton donor) is an active-site residue. Position 153 (Arg153) interacts with NAD(+). Lys171 serves as the catalytic Proton acceptor. Residues Glu242, Asp243, and Asp266 each contribute to the a divalent metal cation site. NAD(+)-binding residues include Asp266 and Asn413.

It belongs to the malic enzymes family. As to quaternary structure, homotetramer. The cofactor is Mg(2+). Requires Mn(2+) as cofactor.

It carries out the reaction (S)-malate + NAD(+) = pyruvate + CO2 + NADH. The enzyme catalyses oxaloacetate + H(+) = pyruvate + CO2. The chain is NAD-dependent malic enzyme from Psychrobacter arcticus (strain DSM 17307 / VKM B-2377 / 273-4).